The sequence spans 643 residues: Ecto-NOX disulfide-thiol exchanger 1 (643 aa).

An RRM domain is found at 142 to 221 (KTVFVGGLPE…GRLHVDFAQA (80 aa)). 2 coiled-coil regions span residues 307–342 (VQSA…LTGI) and 425–521 (QAYA…QLKG).

The protein belongs to the ENOX family. It depends on Cu cation as a cofactor.

Its subcellular location is the cell membrane. It localises to the secreted. The protein resides in the extracellular space. Not inhibited by the antitumor sulfonylurea LY181984, the vabilloid capsaicin, and retinoids. Probably acts as a terminal oxidase of plasma electron transport from cytosolic NAD(P)H via hydroquinones to acceptors at the cell surface. Hydroquinone oxidase activity alternates with a protein disulfide-thiol interchange/oxidoreductase activity which may control physical membrane displacements associated with vesicle budding or cell enlargement. The activities oscillate with a period length of 24 minutes and play a role in control of the ultradian cellular biological clock. This chain is Ecto-NOX disulfide-thiol exchanger 1 (Enox1), found in Mus musculus (Mouse).